We begin with the raw amino-acid sequence, 60 residues long: Short neurotoxin 1 (60 aa).

4 disulfide bridges follow: Cys-3-Cys-22, Cys-17-Cys-39, Cys-41-Cys-52, and Cys-53-Cys-58.

It belongs to the three-finger toxin family. Short-chain subfamily. Type I alpha-neurotoxin sub-subfamily. In terms of tissue distribution, expressed by the venom gland.

Its subcellular location is the secreted. Functionally, binds to muscle nicotinic acetylcholine receptor (nAChR) and inhibit acetylcholine from binding to the receptor, thereby impairing neuromuscular transmission. The polypeptide is Short neurotoxin 1 (Dendroaspis viridis (Western green mamba)).